The primary structure comprises 638 residues: Acetolactate synthase 1, chloroplastic (638 aa).

Residues 1–19 are compositionally biased toward low complexity; sequence MATAAAASTALTGATTAAP. A disordered region spans residues 1–23; it reads MATAAAASTALTGATTAAPKARR. A chloroplast-targeting transit peptide spans 1–39; sequence MATAAAASTALTGATTAAPKARRRAHLLATRRALAAPIR. Residue E112 coordinates thiamine diphosphate. C132 and C278 are oxidised to a cystine. FAD is bound by residues R214, 320-341, and 363-382; these read HGTVYANYAVDKADLLLALGVR and DIDPAEIGKNKQPHVSICAD. Residues 455–535 are thiamine pyrophosphate binding; sequence QHQMWAAQYY…VKVFVLNNQH (81 aa). Mg(2+) is bound by residues D506 and N533.

Belongs to the TPP enzyme family. Mg(2+) is required as a cofactor. Requires thiamine diphosphate as cofactor.

It localises to the plastid. Its subcellular location is the chloroplast. The catalysed reaction is 2 pyruvate + H(+) = (2S)-2-acetolactate + CO2. It functions in the pathway amino-acid biosynthesis; L-isoleucine biosynthesis; L-isoleucine from 2-oxobutanoate: step 1/4. It participates in amino-acid biosynthesis; L-valine biosynthesis; L-valine from pyruvate: step 1/4. In Zea mays (Maize), this protein is Acetolactate synthase 1, chloroplastic (ALS1).